The sequence spans 525 residues: ATP synthase subunit alpha (525 aa).

169 to 176 (GDRQTGKT) is an ATP binding site.

This sequence belongs to the ATPase alpha/beta chains family. F-type ATPases have 2 components, CF(1) - the catalytic core - and CF(0) - the membrane proton channel. CF(1) has five subunits: alpha(3), beta(3), gamma(1), delta(1), epsilon(1). CF(0) has three main subunits: a(1), b(2) and c(9-12). The alpha and beta chains form an alternating ring which encloses part of the gamma chain. CF(1) is attached to CF(0) by a central stalk formed by the gamma and epsilon chains, while a peripheral stalk is formed by the delta and b chains.

It localises to the cell membrane. It catalyses the reaction ATP + H2O + 4 H(+)(in) = ADP + phosphate + 5 H(+)(out). Functionally, produces ATP from ADP in the presence of a proton gradient across the membrane. The alpha chain is a regulatory subunit. The sequence is that of ATP synthase subunit alpha from Mesoplasma florum (strain ATCC 33453 / NBRC 100688 / NCTC 11704 / L1) (Acholeplasma florum).